Here is a 141-residue protein sequence, read N- to C-terminus: Hemoglobin subunit alpha-A (141 aa).

The 141-residue stretch at 1-141 folds into the Globin domain; it reads VLSGSDKTNV…VGNVLTAKYR (141 aa). H58 lines the O2 pocket. Heme b is bound at residue H87.

The protein belongs to the globin family. Heterotetramer of two alpha chains and two beta chains. As to expression, red blood cells.

Functionally, involved in oxygen transport from the lung to the various peripheral tissues. This chain is Hemoglobin subunit alpha-A (HBAA), found in Chroicocephalus ridibundus (Black-headed gull).